The sequence spans 416 residues: GTPase Obg (416 aa).

In terms of domain architecture, Obg spans 1-157 (MFQDVLVITV…RRLRLELMLI (157 aa)). 2 disordered regions span residues 25 to 44 (EKFV…GGSV) and 62 to 82 (TYKA…RGGE). Residues 32–42 (GPDGGDGGRGG) are compositionally biased toward gly residues. Residues 63 to 72 (YKAEDGEHGR) show a composition bias toward basic and acidic residues. One can recognise an OBG-type G domain in the interval 158–324 (ADVGLVGYPN…LKEALHALVR (167 aa)). GTP is bound by residues 164–171 (GYPNAGKS), 189–193 (FTTLS), 211–214 (DIPG), 277–280 (NKVD), and 305–307 (SAL). The Mg(2+) site is built by serine 171 and threonine 191. The region spanning 336-414 (PRKEVQAGVE…IGGLEFEYIP (79 aa)) is the OCT domain.

The protein belongs to the TRAFAC class OBG-HflX-like GTPase superfamily. OBG GTPase family. Monomer. Mg(2+) is required as a cofactor.

Its subcellular location is the cytoplasm. Functionally, an essential GTPase which binds GTP, GDP and possibly (p)ppGpp with moderate affinity, with high nucleotide exchange rates and a fairly low GTP hydrolysis rate. Plays a role in control of the cell cycle, stress response, ribosome biogenesis and in those bacteria that undergo differentiation, in morphogenesis control. This Thermus thermophilus (strain ATCC 27634 / DSM 579 / HB8) protein is GTPase Obg.